The primary structure comprises 132 residues: Large ribosomal subunit protein uL14 (132 aa).

This sequence belongs to the universal ribosomal protein uL14 family. Part of the 50S ribosomal subunit. Forms a cluster with proteins L3 and L24e, part of which may contact the 16S rRNA in 2 intersubunit bridges.

Functionally, binds to 23S rRNA. Forms part of two intersubunit bridges in the 70S ribosome. The protein is Large ribosomal subunit protein uL14 of Methanosarcina mazei (strain ATCC BAA-159 / DSM 3647 / Goe1 / Go1 / JCM 11833 / OCM 88) (Methanosarcina frisia).